The primary structure comprises 300 residues: 4-hydroxy-tetrahydrodipicolinate synthase (300 aa).

T56 contacts pyruvate. Y145 acts as the Proton donor/acceptor in catalysis. The active-site Schiff-base intermediate with substrate is the K173. Residue V215 participates in pyruvate binding.

This sequence belongs to the DapA family. As to quaternary structure, homotetramer; dimer of dimers.

The protein localises to the cytoplasm. The enzyme catalyses L-aspartate 4-semialdehyde + pyruvate = (2S,4S)-4-hydroxy-2,3,4,5-tetrahydrodipicolinate + H2O + H(+). It participates in amino-acid biosynthesis; L-lysine biosynthesis via DAP pathway; (S)-tetrahydrodipicolinate from L-aspartate: step 3/4. Its function is as follows. Catalyzes the condensation of (S)-aspartate-beta-semialdehyde [(S)-ASA] and pyruvate to 4-hydroxy-tetrahydrodipicolinate (HTPA). The chain is 4-hydroxy-tetrahydrodipicolinate synthase from Prochlorococcus marinus (strain AS9601).